We begin with the raw amino-acid sequence, 139 residues long: Putative lipoprotein MIP_01412 (139 aa).

The N-terminal stretch at M1–A19 is a signal peptide. C20 carries the N-palmitoyl cysteine lipid modification. C20 carries the S-diacylglycerol cysteine lipid modification.

Belongs to the mycobacterial 19 kDa antigen family.

The protein resides in the cell membrane. In Mycobacterium indicus pranii (strain DSM 45239 / MTCC 9506), this protein is Putative lipoprotein MIP_01412.